The following is a 116-amino-acid chain: Small ribosomal subunit protein uS13m (116 aa).

This sequence belongs to the universal ribosomal protein uS13 family. As to quaternary structure, part of the small ribosomal subunit.

It is found in the mitochondrion. In terms of biological role, located at the top of the head of the small subunit, it contacts several helices of the 18S rRNA. This chain is Small ribosomal subunit protein uS13m (RPS13), found in Nicotiana tabacum (Common tobacco).